The following is a 142-amino-acid chain: Large ribosomal subunit protein uL11 (142 aa).

It belongs to the universal ribosomal protein uL11 family. In terms of assembly, part of the ribosomal stalk of the 50S ribosomal subunit. Interacts with L10 and the large rRNA to form the base of the stalk. L10 forms an elongated spine to which L12 dimers bind in a sequential fashion forming a multimeric L10(L12)X complex. Post-translationally, one or more lysine residues are methylated.

Functionally, forms part of the ribosomal stalk which helps the ribosome interact with GTP-bound translation factors. This Parvibaculum lavamentivorans (strain DS-1 / DSM 13023 / NCIMB 13966) protein is Large ribosomal subunit protein uL11.